The sequence spans 419 residues: Glutamate dehydrogenase (419 aa).

The active site involves Lys105. Position 219–225 (Gly219–Tyr225) interacts with NAD(+).

The protein belongs to the Glu/Leu/Phe/Val dehydrogenases family. As to quaternary structure, homohexamer.

Its subcellular location is the cytoplasm. The catalysed reaction is L-glutamate + NAD(+) + H2O = 2-oxoglutarate + NH4(+) + NADH + H(+). It catalyses the reaction L-glutamate + NADP(+) + H2O = 2-oxoglutarate + NH4(+) + NADPH + H(+). The chain is Glutamate dehydrogenase (gdhA) from Thermococcus litoralis (strain ATCC 51850 / DSM 5473 / JCM 8560 / NS-C).